The following is a 460-amino-acid chain: MNTNQNDENIEKQPSQRGLKNRHIQLIAIAGTIGTGLFLGAGKSIHLTGPSIIFVYLIIGALMYILLRAIGEMLYQDPSQHSFLNFVSRYMGAKPGYFIQWSYLLVVVFVAMAELIAIGTYINFWLPDLPIWMTEVFVLVLLTLLNTLNPKFFGETEFWFGMIKIVAIIGLILTAIILIFSHYHTGTDTVSLTNITKGFEFFPNGVSSFFESFQMVMFAFVSMEFIGMTAAETDNPRPTLKKAINQIPIRIVLFYIGALLAIMSIYQWRDIPADKSPFVTIFQLIGIKWAAALVNFVVLTSAASALNSALFSITRNLYSLSQLNDDKILKPFTKFSKAGVPVNALLFTSLLILFTPFISMIPAISNSFVFITSVATNLFLVVYLMTLITYLKYRKSKDFDPSGFTLPAAHIFIPLAIAGFVLIFISLFCFKDTIIPAIGSVIWVLIFGLFTFFRKIKTAD.

Helical transmembrane passes span 26–46, 47–67, 98–118, 124–144, 160–180, 209–229, 246–266, 278–298, 344–364, 368–388, 410–430, and 433–453; these read LIAIAGTIGTGLFLGAGKSIH, LTGPSIIFVYLIIGALMYILL, FIQWSYLLVVVFVAMAELIAI, FWLPDLPIWMTEVFVLVLLTL, FGMIKIVAIIGLILTAIILIF, FFESFQMVMFAFVSMEFIGMT, QIPIRIVLFYIGALLAIMSIY, FVTIFQLIGIKWAAALVNFVV, ALLFTSLLILFTPFISMIPAI, FVFITSVATNLFLVVYLMTLI, HIFIPLAIAGFVLIFISLFCF, and TIIPAIGSVIWVLIFGLFTFF.

It belongs to the amino acid-polyamine-organocation (APC) superfamily. Amino acid transporter (AAT) (TC 2.A.3.1) family.

The protein localises to the cell membrane. In terms of biological role, transports DL-alanine, DL-serine and glycine. The preferred substrate is DL-alanine. L-serine is a low-affinity substrate. This Lactococcus lactis subsp. cremoris (strain MG1363) protein is DL-alanine permease SerP2.